An 87-amino-acid chain; its full sequence is Small ribosomal subunit protein bS20 (87 aa).

The interval 1-26 (MANTKSALKRIRQTATRTARNRAVTS) is disordered. A compositionally biased stretch (low complexity) spans 13–23 (QTATRTARNRA).

Belongs to the bacterial ribosomal protein bS20 family.

Binds directly to 16S ribosomal RNA. This is Small ribosomal subunit protein bS20 from Akkermansia muciniphila (strain ATCC BAA-835 / DSM 22959 / JCM 33894 / BCRC 81048 / CCUG 64013 / CIP 107961 / Muc).